The chain runs to 370 residues: Platelet-derived growth factor D (370 aa).

Positions 1–18 are cleaved as a signal peptide; it reads MHRLIFVYTLICANFCSC. Positions 52–170 constitute a CUB domain; sequence RDETIQVKGN…PGFKIYYSLL (119 aa). The cysteines at positions 109 and 131 are disulfide-linked. The N-linked (GlcNAc...) asparagine glycan is linked to N276. 2 disulfide bridges follow: C302/C360 and C306/C362.

It belongs to the PDGF/VEGF growth factor family. As to quaternary structure, homodimer; disulfide-linked. Interacts with PDGFRB homodimers, and with heterodimers formed by PDGFRA and PDGFRB. Post-translationally, activated by proteolytic cleavage. Proteolytic removal of the N-terminal CUB domain releasing the core domain is necessary for unmasking the receptor-binding epitopes of the core domain. Cleavage after Arg-247 or Arg-249 by urokinase plasminogen activator gives rise to the active form. Expressed at high levels in the heart, pancreas, adrenal gland and ovary and at low levels in placenta, liver, kidney, prostate, testis, small intestine, spleen and colon. In the kidney, expressed by the visceral epithelial cells of the glomeruli. A widespread expression is also seen in the medial smooth muscle cells of arteries and arterioles, as well as in smooth muscle cells of vasa rectae in the medullary area. Expressed in the adventitial connective tissue surrounding the suprarenal artery. In chronic obstructive nephropathy, a persistent expression is seen in glomerular visceral epithelial cells and vascular smooth muscle cells, as well as de novo expression by periglomerular interstitial cells and by some neointimal cells of atherosclerotic vessels. Expression in normal prostate is seen preferentially in the mesenchyme of the gland while expression is increased and more profuse in prostate carcinoma. Expressed in many ovarian, lung, renal and brain cancer-derived cell lines.

It is found in the secreted. Growth factor that plays an essential role in the regulation of embryonic development, cell proliferation, cell migration, survival and chemotaxis. Potent mitogen for cells of mesenchymal origin. Plays an important role in wound healing. Induces macrophage recruitment, increased interstitial pressure, and blood vessel maturation during angiogenesis. Can initiate events that lead to a mesangial proliferative glomerulonephritis, including influx of monocytes and macrophages and production of extracellular matrix. This is Platelet-derived growth factor D (PDGFD) from Homo sapiens (Human).